Consider the following 80-residue polypeptide: Large ribosomal subunit protein uL24 (80 aa).

The tract at residues 53 to 80 (HMRPTQSNPQGSIIEREFPIHASNVKKS) is disordered.

The protein belongs to the universal ribosomal protein uL24 family. Part of the 50S ribosomal subunit.

In terms of biological role, one of two assembly initiator proteins, it binds directly to the 5'-end of the 23S rRNA, where it nucleates assembly of the 50S subunit. Its function is as follows. One of the proteins that surrounds the polypeptide exit tunnel on the outside of the subunit. The protein is Large ribosomal subunit protein uL24 of Chlorobium luteolum (strain DSM 273 / BCRC 81028 / 2530) (Pelodictyon luteolum).